A 253-amino-acid polypeptide reads, in one-letter code: 5'/3'-nucleotidase SurE (253 aa).

4 residues coordinate a divalent metal cation: aspartate 8, aspartate 9, serine 39, and asparagine 92.

This sequence belongs to the SurE nucleotidase family. It depends on a divalent metal cation as a cofactor.

It localises to the cytoplasm. It catalyses the reaction a ribonucleoside 5'-phosphate + H2O = a ribonucleoside + phosphate. The catalysed reaction is a ribonucleoside 3'-phosphate + H2O = a ribonucleoside + phosphate. The enzyme catalyses [phosphate](n) + H2O = [phosphate](n-1) + phosphate + H(+). Nucleotidase with a broad substrate specificity as it can dephosphorylate various ribo- and deoxyribonucleoside 5'-monophosphates and ribonucleoside 3'-monophosphates with highest affinity to 3'-AMP. Also hydrolyzes polyphosphate (exopolyphosphatase activity) with the preference for short-chain-length substrates (P20-25). Might be involved in the regulation of dNTP and NTP pools, and in the turnover of 3'-mononucleotides produced by numerous intracellular RNases (T1, T2, and F) during the degradation of various RNAs. This chain is 5'/3'-nucleotidase SurE, found in Salmonella arizonae (strain ATCC BAA-731 / CDC346-86 / RSK2980).